Consider the following 427-residue polypeptide: Dihydrofolate synthetase (427 aa).

34–37 is a binding site for ATP; sequence GKGS. Mg(2+) is bound by residues glutamate 123 and histidine 153. ATP contacts are provided by arginine 275 and aspartate 296.

It belongs to the folylpolyglutamate synthase family.

The protein resides in the cytoplasm. It carries out the reaction 7,8-dihydropteroate + L-glutamate + ATP = 7,8-dihydrofolate + ADP + phosphate + H(+). It functions in the pathway cofactor biosynthesis; tetrahydrofolylpolyglutamate biosynthesis. Its function is as follows. Glutamate-adding enzyme which catalyzes the binding of the first glutamyl side chain to dihydropteroate. Leads to the de nove synthesis of tetrahydrofolate. The protein is Dihydrofolate synthetase (FOL3) of Saccharomyces cerevisiae (strain ATCC 204508 / S288c) (Baker's yeast).